The sequence spans 519 residues: Ent-kaurene oxidase (519 aa).

Residues 1 to 10 (MDTLLSLQAV) lie on the Chloroplast intermembrane side of the membrane. A helical membrane pass occupies residues 11 to 31 (PAAAAIGGPVVAIGGITLFFI). Topologically, residues 32–519 (REYVKDQRKK…PRLRDRVCVS (488 aa)) are cytoplasmic. Cys458 provides a ligand contact to heme.

The protein belongs to the cytochrome P450 family. Requires heme as cofactor.

It is found in the plastid. The protein localises to the chloroplast outer membrane. The enzyme catalyses ent-kaur-16-ene + 3 reduced [NADPH--hemoprotein reductase] + 3 O2 = ent-kaur-16-en-19-oate + 3 oxidized [NADPH--hemoprotein reductase] + 4 H2O + 4 H(+). It participates in plant hormone biosynthesis; gibberellin biosynthesis. In terms of biological role, catalyzes three successive oxidations of the 4-methyl group of ent-kaurene giving kaurenoic acid, a key step in gibberellins (GAs) biosynthesis. GAs, which are involved many processes, including stem elongation, play a central role in plant development. The protein is Ent-kaurene oxidase of Salvia miltiorrhiza (Chinese sage).